Here is a 193-residue protein sequence, read N- to C-terminus: Acyl carrier protein phosphodiesterase (193 aa).

The protein belongs to the AcpH family.

The enzyme catalyses holo-[ACP] + H2O = apo-[ACP] + (R)-4'-phosphopantetheine + H(+). In terms of biological role, converts holo-ACP to apo-ACP by hydrolytic cleavage of the phosphopantetheine prosthetic group from ACP. This is Acyl carrier protein phosphodiesterase from Pectobacterium atrosepticum (strain SCRI 1043 / ATCC BAA-672) (Erwinia carotovora subsp. atroseptica).